The sequence spans 350 residues: Protein XRP2 (350 aa).

Positions M1–K10 are enriched in basic residues. The segment at M1–Q31 is disordered. G2 carries N-myristoyl glycine lipidation. C3 carries S-palmitoyl cysteine lipidation. Residues A11 to Q31 show a composition bias toward basic and acidic residues. The 156-residue stretch at P24–P179 folds into the C-CAP/cofactor C-like domain. Residues G98–S99 and Q115–R118 contribute to the GTP site.

Belongs to the TBCC family. In terms of assembly, found in a complex with ARL3, RP2 and UNC119 (or UNC119B); RP2 induces hydrolysis of GTP ARL3 in the complex, leading to the release of UNC119 (or UNC119B). Interacts with ARL3; interaction is direct and stimulated with the activated GTP-bound form of ARL3. Myristoylated on Gly-2; which may be required for membrane targeting. In terms of processing, palmitoylated on Cys-3; which may be required for plasma membrane targeting. Mutation of Cys-3 targets the protein to internal membranes. Ubiquitous. Expressed in the rod and cone photoreceptors, extending from the tips of the outer segment (OS) through the inner segment (IS) and outer nuclear layer (ONL) and into the synaptic terminals of the outer plexiform layer (ONL). Also detected in the bipolar, horizontal and amacrine cells in the inner nuclear layer (INL), extending to the inner plexiform layer (IPL) and though the ganglion cell layer (GCL) and into the nerve fiber layer (NFL) (at protein level).

The protein localises to the cell membrane. It is found in the cell projection. The protein resides in the cilium. Functionally, acts as a GTPase-activating protein (GAP) involved in trafficking between the Golgi and the ciliary membrane. Involved in localization of proteins, such as NPHP3, to the cilium membrane by inducing hydrolysis of GTP ARL3, leading to the release of UNC119 (or UNC119B). Acts as a GTPase-activating protein (GAP) for tubulin in concert with tubulin-specific chaperone C, but does not enhance tubulin heterodimerization. Acts as a guanine nucleotide dissociation inhibitor towards ADP-ribosylation factor-like proteins. The polypeptide is Protein XRP2 (RP2) (Homo sapiens (Human)).